The chain runs to 1020 residues: Phosphatidylinositol 3-kinase VPS34 (1020 aa).

The C2 PI3K-type domain maps to 49–210 (LSTKFEDPTV…NWLDKMVLPK (162 aa)). The PIK helical domain maps to 331-577 (DKELKPTPQL…DGPIKIYMDI (247 aa)). In terms of domain architecture, PI3K/PI4K catalytic spans 666-1004 (YPEESSVFKS…LINDSVNAFL (339 aa)). Residues 672-678 (VFKSSLA) are G-loop. The segment at 873 to 881 (GVGDRHLDN) is catalytic loop. Positions 892-913 (HADFGYILGRDPKPFPPLMKLP) are activation loop.

Belongs to the PI3/PI4-kinase family. As to quaternary structure, component of the autophagy-specific VPS34 PI3-kinase complex I composed of at least VPS15, VPS30, VPS34, and of the VPS34 PI3-kinase complex II composed of VPS15, VPS30, VPS34 and VPS38. Interacts with VMNA7. Post-translationally, autophosphorylated.

The protein localises to the golgi apparatus. It localises to the trans-Golgi network membrane. Its subcellular location is the endosome membrane. The enzyme catalyses a 1,2-diacyl-sn-glycero-3-phospho-(1D-myo-inositol) + ATP = a 1,2-diacyl-sn-glycero-3-phospho-(1D-myo-inositol-3-phosphate) + ADP + H(+). Its function is as follows. Multifunctional phosphatidylinositol 3-kinase involved in acidification of vacuoles, pH-dependent cell growth, and autophagocytosis. Plays an important role in protein transport and virulence. Component of the autophagy-specific VPS34 PI3-kinase complex I essential to recruit the ATG8-phosphatidylinositol conjugate and the ATG12-ATG5 conjugate to the pre-autophagosomal structure. Also involved in endosome-to-Golgi retrograde transport as part of the VPS34 PI3-kinase complex II. This second complex is required for the endosome-to-Golgi retrieval of PEP1 and KEX2, and the recruitment of VPS5 and VPS7, two components of the retromer complex, to endosomal membranes (probably through the synthesis of a specific pool of phosphatidylinositol 3-phosphate recruiting the retromer to the endosomes). Finally, it might also be involved in ethanol tolerance and cell wall integrity. This is Phosphatidylinositol 3-kinase VPS34 from Candida albicans (strain SC5314 / ATCC MYA-2876) (Yeast).